The sequence spans 33 residues: Cytochrome b6-f complex subunit 8 (33 aa).

Residues 2–22 (LITLGWASLAALFSFSIAMVV) form a helical membrane-spanning segment.

The protein belongs to the PetN family. In terms of assembly, the 4 large subunits of the cytochrome b6-f complex are cytochrome b6, subunit IV (17 kDa polypeptide, PetD), cytochrome f and the Rieske protein, while the 4 small subunits are PetG, PetL, PetM and PetN. The complex functions as a dimer.

Its subcellular location is the plastid. The protein resides in the organellar chromatophore thylakoid membrane. Component of the cytochrome b6-f complex, which mediates electron transfer between photosystem II (PSII) and photosystem I (PSI), cyclic electron flow around PSI, and state transitions. This Paulinella chromatophora protein is Cytochrome b6-f complex subunit 8.